A 154-amino-acid polypeptide reads, in one-letter code: Ribosome maturation factor RimP (154 aa).

It belongs to the RimP family.

It is found in the cytoplasm. Required for maturation of 30S ribosomal subunits. The sequence is that of Ribosome maturation factor RimP from Clostridium kluyveri (strain ATCC 8527 / DSM 555 / NBRC 12016 / NCIMB 10680 / K1).